The sequence spans 425 residues: Serine--tRNA ligase (425 aa).

Residue 230–232 participates in L-serine binding; that stretch reads TAE. 261–263 is an ATP binding site; it reads RSE. Glu284 serves as a coordination point for L-serine. 348-351 is an ATP binding site; sequence EISS. L-serine is bound at residue Ser384.

Belongs to the class-II aminoacyl-tRNA synthetase family. Type-1 seryl-tRNA synthetase subfamily. In terms of assembly, homodimer. The tRNA molecule binds across the dimer.

It localises to the cytoplasm. It catalyses the reaction tRNA(Ser) + L-serine + ATP = L-seryl-tRNA(Ser) + AMP + diphosphate + H(+). It carries out the reaction tRNA(Sec) + L-serine + ATP = L-seryl-tRNA(Sec) + AMP + diphosphate + H(+). The protein operates within aminoacyl-tRNA biosynthesis; selenocysteinyl-tRNA(Sec) biosynthesis; L-seryl-tRNA(Sec) from L-serine and tRNA(Sec): step 1/1. Catalyzes the attachment of serine to tRNA(Ser). Is also able to aminoacylate tRNA(Sec) with serine, to form the misacylated tRNA L-seryl-tRNA(Sec), which will be further converted into selenocysteinyl-tRNA(Sec). In Streptococcus pyogenes serotype M28 (strain MGAS6180), this protein is Serine--tRNA ligase.